The chain runs to 250 residues: MVNIHVVIPARLKSTRLPGKMLADIAGKPMIQRVYEQVAKSKFKSIIIATDSQEIKEVAENFGAKVILTRDDHESGTDRIAEAVTKLGFADEDIVVNVQGDEPLIPVENIEQAAQLLIEKPEAVVSTLCERITEAEDIYNPNNVKVVFDKNNYALYFSRASIPFERGFSENHQVSISEFFRHIGIYTYRVGFLKHYAELAISPIEKYEALEQLRVLYNGYKIAIEQSAKPTPAGVDTLQDLEKVRKLFDV.

It belongs to the KdsB family.

The protein resides in the cytoplasm. The enzyme catalyses 3-deoxy-alpha-D-manno-oct-2-ulosonate + CTP = CMP-3-deoxy-beta-D-manno-octulosonate + diphosphate. Its pathway is nucleotide-sugar biosynthesis; CMP-3-deoxy-D-manno-octulosonate biosynthesis; CMP-3-deoxy-D-manno-octulosonate from 3-deoxy-D-manno-octulosonate and CTP: step 1/1. It functions in the pathway bacterial outer membrane biogenesis; lipopolysaccharide biosynthesis. Activates KDO (a required 8-carbon sugar) for incorporation into bacterial lipopolysaccharide in Gram-negative bacteria. This chain is 3-deoxy-manno-octulosonate cytidylyltransferase, found in Francisella philomiragia subsp. philomiragia (strain ATCC 25017 / CCUG 19701 / FSC 153 / O#319-036).